The sequence spans 350 residues: MVGSLIMEEDIYLDLFLDPYTIQDDFPPAMSQLFSPGVPLDMHSLPSNPETVFHPHLGGVKKASTDFSSVDLSFLPDELTQENRDQTVTGNKLASEESCRTRDRQSQLQLPDEHGSELNLNSNSSPDPQSCLCFDDAHSNQPSPETPNSNALPVALIASMMPMNPVPGFSGIVPQLQNVVSTANLACKLDLRKIALNAKNTEYNPKRFAAVIMRIREPRTTALIFSSGKVVCTGAKSEEESRLAARKYARVVQKLGFPVRFFNFKIQNMVGSCDVKFPIRLEILALTHRQFSSSYEPELFPGLIYKMVKPQVVLLIFASGKVVLTGAKERSEIYEAFENMYPILESFKKV.

The tract at residues 82–150 (ENRDQTVTGN…QPSPETPNSN (69 aa)) is disordered. The segment covering 94-116 (ASEESCRTRDRQSQLQLPDEHGS) has biased composition (basic and acidic residues). 2 stretches are compositionally biased toward polar residues: residues 118 to 128 (LNLNSNSSPDP) and 139 to 150 (SNQPSPETPNSN).

This sequence belongs to the TBP family. In terms of assembly, interacts with TAF3. Expressed in myotubes and myofibers (at protein level). Expressed in a wide variety of tissues with highest levels in heart, lung, liver, uterus and placenta and especially the gonads. Expression is higher in the ovary than the testis, and within the ovary expression is localized to the oocytes.

Its subcellular location is the cytoplasm. It is found in the nucleus. Functionally, transcription factor required in complex with TAF3 for the differentiation of myoblasts into myocytes. The complex replaces TFIID at specific promoters at an early stage in the differentiation process. The sequence is that of TATA box-binding protein-like 2 from Mus musculus (Mouse).